Here is a 660-residue protein sequence, read N- to C-terminus: Threonine--tRNA ligase (660 aa).

In terms of domain architecture, TGS spans 1 to 49; it reads MPINEIRVQKGQRYRDAINDKKVIAVKKGDKFLDLDEIAGEDEAVQPVY. The catalytic stretch occupies residues 225 to 554; the sequence is DHRKIIAEMD…LLEHFAGKLP (330 aa). Residues C318, H369, and H531 each contribute to the Zn(2+) site.

This sequence belongs to the class-II aminoacyl-tRNA synthetase family. In terms of assembly, homodimer. The cofactor is Zn(2+).

It localises to the cytoplasm. The catalysed reaction is tRNA(Thr) + L-threonine + ATP = L-threonyl-tRNA(Thr) + AMP + diphosphate + H(+). In terms of biological role, catalyzes the attachment of threonine to tRNA(Thr) in a two-step reaction: L-threonine is first activated by ATP to form Thr-AMP and then transferred to the acceptor end of tRNA(Thr). This chain is Threonine--tRNA ligase, found in Thermoplasma volcanium (strain ATCC 51530 / DSM 4299 / JCM 9571 / NBRC 15438 / GSS1).